The chain runs to 295 residues: Pyridoxal 5'-phosphate synthase subunit PdxS (295 aa).

D-ribose 5-phosphate is bound at residue D23. The Schiff-base intermediate with D-ribose 5-phosphate role is filled by K80. G152 contacts D-ribose 5-phosphate. A D-glyceraldehyde 3-phosphate-binding site is contributed by R164. Residues G213 and 234 to 235 (GS) each bind D-ribose 5-phosphate.

It belongs to the PdxS/SNZ family. In the presence of PdxT, forms a dodecamer of heterodimers.

It carries out the reaction aldehydo-D-ribose 5-phosphate + D-glyceraldehyde 3-phosphate + L-glutamine = pyridoxal 5'-phosphate + L-glutamate + phosphate + 3 H2O + H(+). It participates in cofactor biosynthesis; pyridoxal 5'-phosphate biosynthesis. Its function is as follows. Catalyzes the formation of pyridoxal 5'-phosphate from ribose 5-phosphate (RBP), glyceraldehyde 3-phosphate (G3P) and ammonia. The ammonia is provided by the PdxT subunit. Can also use ribulose 5-phosphate and dihydroxyacetone phosphate as substrates, resulting from enzyme-catalyzed isomerization of RBP and G3P, respectively. This is Pyridoxal 5'-phosphate synthase subunit PdxS from Methanopyrus kandleri (strain AV19 / DSM 6324 / JCM 9639 / NBRC 100938).